The primary structure comprises 188 residues: PRA1 family protein F4 (188 aa).

The span at 1 to 13 shows a compositional bias: polar residues; that stretch reads MANNDEITTSSHA. The disordered stretch occupies residues 1 to 25; it reads MANNDEITTSSHASPAVNHESISRA. Helical transmembrane passes span 67 to 86, 90 to 107, 119 to 139, and 142 to 162; these read YFRS…SLIW, SLIV…LYFL, IDDR…LLLT, and TFNI…HAVI.

Belongs to the PRA1 family.

The protein localises to the endosome membrane. Functionally, may be involved in both secretory and endocytic intracellular trafficking in the endosomal/prevacuolar compartments. The chain is PRA1 family protein F4 (PRA1F4) from Arabidopsis thaliana (Mouse-ear cress).